A 157-amino-acid chain; its full sequence is Phosphopantetheine adenylyltransferase (157 aa).

Ser9 contacts substrate. ATP contacts are provided by residues 9-10 (SF) and His17. Substrate is bound by residues Lys41, Leu74, and Lys88. Residues 89-91 (GLR), Glu99, and 123-129 (YTHVSSS) contribute to the ATP site.

This sequence belongs to the bacterial CoaD family. In terms of assembly, homohexamer. It depends on Mg(2+) as a cofactor.

It localises to the cytoplasm. The enzyme catalyses (R)-4'-phosphopantetheine + ATP + H(+) = 3'-dephospho-CoA + diphosphate. The protein operates within cofactor biosynthesis; coenzyme A biosynthesis; CoA from (R)-pantothenate: step 4/5. Its function is as follows. Reversibly transfers an adenylyl group from ATP to 4'-phosphopantetheine, yielding dephospho-CoA (dPCoA) and pyrophosphate. The polypeptide is Phosphopantetheine adenylyltransferase (Micrococcus luteus (strain ATCC 4698 / DSM 20030 / JCM 1464 / CCM 169 / CCUG 5858 / IAM 1056 / NBRC 3333 / NCIMB 9278 / NCTC 2665 / VKM Ac-2230) (Micrococcus lysodeikticus)).